Here is a 154-residue protein sequence, read N- to C-terminus: Cell cycle regulator of non-homologous end joining (154 aa).

An N-acetylmethionine modification is found at methionine 1. The KBM signature appears at 1-21 (METLKSENKKRVLPSWMTAPV). The disordered stretch occupies residues 77-144 (EEPTLVAPDK…RSPEEEEEDA (68 aa)). Low complexity predominate over residues 95-105 (ASPHTSSPGSS). Residues 144–154 (ALKYVREIFFS) carry the XLM motif.

Interacts (via KBM motif) with XRCC5/Ku80 and XRCC6/Ku70 heterodimer. Interacts (via XLF motif) with TRIM28/KAP1, ATM, MRE11, NBN and RAD50. Interacts with splicing factor SF3B1. Interacts with ERCC6L2; this interaction is DNA independent.

The protein localises to the cytoplasm. The protein resides in the nucleus. It is found in the chromosome. Functionally, cell-cycle-specific regulator of classical non-homologous end joining (NHEJ) of DNA double-strand break (DSB) repair, which can act both as an activator or inhibitor of NHEJ, depending on the cell cycle phase. Acts as a regulator of DNA repair pathway choice by specifically inhibiting classical NHEJ during the S and G2 phases, thereby promoting error-free repair by homologous recombination during cell cycle phases when sister chromatids are present. Preferentially protects single-stranded overhangs at break sites by inhibiting classical NHEJ, thereby creating a local environment that favors homologous recombination. Acts via interaction with XRCC5/Ku80 and XRCC6/Ku70. In contrast, acts as an activator of NHEJ during G1 phase of the cell cycle: promotes classical NHEJ in G1 phase cells via multivalent interactions that increase the affinity of DNA damage response proteins for DSB-associated chromatin. Also involved in immunoglobulin V(D)J recombination. May act as a regulator of proteasome. In case of infection by a retrovirus, may regulate the proteasome during the uncoating phase of retrovirus. The chain is Cell cycle regulator of non-homologous end joining from Cricetulus griseus (Chinese hamster).